The primary structure comprises 638 residues: MEALRIYLWSLCLSLCLIIYGANSDPLEDKRALLEFLTIMQPTRSLNWNETSQVCNIWTGVTCNQDGSRIIAVRLPGVGLNGQIPPNTISRLSALRVLSLRSNLISGEFPKDFVELKDLAFLYLQDNNLSGPLPLDFSVWKNLTSVNLSNNGFNGTIPSSLSRLKRIQSLNLANNTLSGDIPDLSVLSSLQHIDLSNNYDLAGPIPDWLRRFPFSSYTGIDIIPPGGNYTLVTPPPPSEQTHQKPSKARFLGLSETVFLLIVIAVSIVVITALAFVLTVCYVRRKLRRGDGVISDNKLQKKGGMSPEKFVSRMEDVNNRLSFFEGCNYSFDLEDLLRASAEVLGKGTFGTTYKAVLEDATSVAVKRLKDVAAGKRDFEQQMEIIGGIKHENVVELKAYYYSKDEKLMVYDYFSRGSVASLLHGNRGENRIPLDWETRMKIAIGAAKGIARIHKENNGKLVHGNIKSSNIFLNSESNGCVSDLGLTAVMSPLAPPISRQAGYRAPEVTDTRKSSQLSDVYSFGVVLLELLTGKSPIHTTAGDEIIHLVRWVHSVVREEWTAEVFDIELLRYTNIEEEMVEMLQIAMSCVVKAADQRPKMSDLVRLIENVGNRRTSIEPEPELKPKSENGASETSTPSEI.

An N-terminal signal peptide occupies residues 1 to 24 (MEALRIYLWSLCLSLCLIIYGANS). LRR repeat units follow at residues 94 to 117 (ALRVLSLRSNLISGEFPKDFVELK), 118 to 139 (DLAFLYLQDNNLSGPLPLDFSV), 142 to 165 (NLTSVNLSNNGFNGTIPSSLSRLK), 166 to 188 (RIQSLNLANNTLSGDIPDLSVLS), and 189 to 198 (SLQHIDLSNN). The helical transmembrane segment at 257-277 (VFLLIVIAVSIVVITALAFVL) threads the bilayer. Residues 337-608 (RASAEVLGKG…SDLVRLIENV (272 aa)) enclose the Protein kinase domain. Ser339 is subject to Phosphoserine. 343-351 (LGKGTFGTT) serves as a coordination point for ATP. Phosphothreonine is present on Thr360. Position 365 (Lys365) interacts with ATP. Ser416 and Ser419 each carry phosphoserine. 2 positions are modified to phosphothreonine: Thr436 and Thr509. Ser513 bears the Phosphoserine mark. The tract at residues 612 to 638 (RTSIEPEPELKPKSENGASETSTPSEI) is disordered. Over residues 613 to 625 (TSIEPEPELKPKS) the composition is skewed to basic and acidic residues. A compositionally biased stretch (polar residues) spans 627–638 (NGASETSTPSEI).

The protein belongs to the protein kinase superfamily.

The protein resides in the membrane. The protein is Probable inactive receptor kinase At4g23740 of Arabidopsis thaliana (Mouse-ear cress).